The sequence spans 273 residues: Putative pyruvate, phosphate dikinase regulatory protein (273 aa).

Residue 153–160 (GISRTSKT) coordinates ADP.

It belongs to the pyruvate, phosphate/water dikinase regulatory protein family. PDRP subfamily.

It carries out the reaction N(tele)-phospho-L-histidyl/L-threonyl-[pyruvate, phosphate dikinase] + ADP = N(tele)-phospho-L-histidyl/O-phospho-L-threonyl-[pyruvate, phosphate dikinase] + AMP + H(+). It catalyses the reaction N(tele)-phospho-L-histidyl/O-phospho-L-threonyl-[pyruvate, phosphate dikinase] + phosphate + H(+) = N(tele)-phospho-L-histidyl/L-threonyl-[pyruvate, phosphate dikinase] + diphosphate. Bifunctional serine/threonine kinase and phosphorylase involved in the regulation of the pyruvate, phosphate dikinase (PPDK) by catalyzing its phosphorylation/dephosphorylation. The protein is Putative pyruvate, phosphate dikinase regulatory protein of Rhizobium etli (strain CIAT 652).